A 132-amino-acid polypeptide reads, in one-letter code: Small ribosomal subunit protein uS8 (132 aa).

It belongs to the universal ribosomal protein uS8 family. As to quaternary structure, part of the 30S ribosomal subunit. Contacts proteins S5 and S12.

One of the primary rRNA binding proteins, it binds directly to 16S rRNA central domain where it helps coordinate assembly of the platform of the 30S subunit. The protein is Small ribosomal subunit protein uS8 of Mycobacterium avium (strain 104).